The primary structure comprises 92 residues: Small ribosomal subunit protein uS19 (92 aa).

It belongs to the universal ribosomal protein uS19 family.

Its function is as follows. Protein S19 forms a complex with S13 that binds strongly to the 16S ribosomal RNA. This chain is Small ribosomal subunit protein uS19, found in Agrobacterium fabrum (strain C58 / ATCC 33970) (Agrobacterium tumefaciens (strain C58)).